Reading from the N-terminus, the 358-residue chain is Protein-L-isoaspartate O-methyltransferase domain-containing protein 1 (358 aa).

Gly-2 carries the N-myristoyl glycine lipid modification. Residue Ser-64 is part of the active site. AdoMet binding motif regions lie at residues 85–94, 160–164, and 181–191; these read LNLGSGTGYL, YDRIY, and LKVGGILVMPI. The tract at residues 240-250 is BC-box; it reads VRNLQDLARIY. The segment at 300–339 is disordered; that stretch reads PLDSEEDERMEDDNKEEEDKDHSEALKPEEPPRNLLREKI. The span at 302 to 318 shows a compositional bias: acidic residues; it reads DSEEDERMEDDNKEEED. The span at 319 to 339 shows a compositional bias: basic and acidic residues; that stretch reads KDHSEALKPEEPPRNLLREKI. The CUL-box stretch occupies residues 342–345; the sequence is LPLP.

The protein belongs to the methyltransferase superfamily. L-isoaspartyl/D-aspartyl protein methyltransferase family. In terms of assembly, component of the probable ECS(PCMTD1) E3 ubiquitin-protein ligase complex, at least composed of CUL5, ELOB, ELOC, RBX2 and PCMTD1.

The protein resides in the cytoplasm. The protein localises to the membrane. In terms of biological role, substrate recognition component of an ECS (Elongin BC-CUL5-SOCS-box protein) E3 ubiquitin ligase complex which mediates the ubiquitination and subsequent proteasomal degradation of target proteins. Specifically binds to the methyltransferase cofactor S-adenosylmethionine (AdoMet) via the N-terminal AdoMet binding motif, but does not display methyltransferase activity. May provide an alternate maintenance pathway for modified proteins by acting as a damage-specific E3 ubiquitin ligase adaptor protein. This Gallus gallus (Chicken) protein is Protein-L-isoaspartate O-methyltransferase domain-containing protein 1 (PCMTD1).